A 327-amino-acid polypeptide reads, in one-letter code: Sphingomyelinase D (327 aa).

The first 23 residues, 1 to 23 (MQPLTRTICALFCLLLTLPLTFG), serve as a signal peptide directing secretion. His-52 is a catalytic residue. 3 residues coordinate Mg(2+): Glu-72, Asp-74, and Asp-117. Positions 320–327 (VTGADKLW) match the SMD-tail motif.

Belongs to the sphingomyelinase D/phospholipase D family. It depends on Mg(2+) as a cofactor.

The protein localises to the secreted. It carries out the reaction a sphingomyelin + H2O = an N-acylsphing-4-enine 1-phosphate + choline + H(+). Catalyzes the hydrolysis of sphingomyelin. Sphingomyelinases D are produced by some spider in their venoms, but also by arthropods such as ticks, or pathogenic bacteria and fungi. They might play a role in pathogenicity through different mechanisms, such as membrane destabilization and host cell penetration, but also pulmonary inflammation and cutaneous lesions. The chain is Sphingomyelinase D from Paracoccidioides brasiliensis (strain Pb03).